The following is a 525-amino-acid chain: BTB/POZ domain-containing protein 2 (525 aa).

Positions 1-86 are disordered; sequence MAAGGSGGRA…AEEAAGPGAA (86 aa). Gly residues predominate over residues 16–26; that stretch reads VGVGPGTGGSP. The segment covering 27–55 has biased composition (low complexity); the sequence is GPSANAAATPAPGNAAAAAAAAAAAAAAP. Residues 56 to 65 show a composition bias toward pro residues; the sequence is GPTPPAPPGP. Positions 66 to 86 are enriched in low complexity; sequence GTDAQAAGAERAEEAAGPGAA. A BTB domain is found at 117–187; it reads CDVHFLVGKG…LYSDEVQIGP (71 aa).

As to quaternary structure, interacts with topoisomerase 1 and with TRIM5 isoform Delta.

The protein localises to the cytoplasm. This Homo sapiens (Human) protein is BTB/POZ domain-containing protein 2 (BTBD2).